The following is a 467-amino-acid chain: Protection of telomeres protein 1a (467 aa).

This sequence belongs to the telombin family. As to quaternary structure, component of the telomerase holoenzyme complex at least composed of TERT, CBF5 and POT1a. The RNA molecule associated to the telomerase complex, and providing a template for telomeric DNA synthesis, is most likely TR and not TER1 as described previously. Interacts with the N-terminal part of TERT. Interacts with CBF5. Interacts with CTC1 and STN1. Does not interact with TEN1. Expressed in roots, rosette leaves, cauline leaves, stems and flowers.

It localises to the nucleus. It is found in the chromosome. Its subcellular location is the telomere. The protein localises to the nucleolus. The protein resides in the cytoplasm. Its function is as follows. Component of the telomerase ribonucleoprotein (RNP) complex that is essential for the positive regulation of telomere length. Binds RNA non-specifically. Binds specifically single-stranded telomeric DNA. Not required to recruit telomerase to telomeres, but stimulates TER1 RNP repeat addition processivity. The polypeptide is Protection of telomeres protein 1a (Arabidopsis thaliana (Mouse-ear cress)).